The sequence spans 421 residues: Periplasmic [Fe] hydrogenase large subunit (421 aa).

2 4Fe-4S ferredoxin-type domains span residues histidine 26–proline 57 and serine 59–serine 86. Residues cysteine 35, cysteine 38, cysteine 41, cysteine 45, cysteine 66, cysteine 69, cysteine 72, cysteine 76, cysteine 179, cysteine 234, cysteine 378, and cysteine 382 each contribute to the [4Fe-4S] cluster site. Cysteine 382 contributes to the Fe(2+) binding site.

In terms of assembly, heterodimer of a large and a small subunit. [4Fe-4S] cluster serves as cofactor. The cofactor is Fe(2+).

It localises to the periplasm. It carries out the reaction H2 + 2 oxidized [2Fe-2S]-[ferredoxin] = 2 reduced [2Fe-2S]-[ferredoxin] + 2 H(+). Functionally, may be involved in hydrogen uptake for the reduction of sulfate to hydrogen sulfide in an electron transport chain. Cytochrome c3 is likely to be the physiological electron carrier for the enzyme. This Nitratidesulfovibrio vulgaris (strain ATCC 29579 / DSM 644 / CCUG 34227 / NCIMB 8303 / VKM B-1760 / Hildenborough) (Desulfovibrio vulgaris) protein is Periplasmic [Fe] hydrogenase large subunit (hydA).